The primary structure comprises 138 residues: Ribulose bisphosphate carboxylase small subunit (138 aa).

It belongs to the RuBisCO small chain family. Heterohexadecamer of 8 large and 8 small subunits.

Its subcellular location is the plastid. It localises to the chloroplast. RuBisCO catalyzes two reactions: the carboxylation of D-ribulose 1,5-bisphosphate, the primary event in carbon dioxide fixation, as well as the oxidative fragmentation of the pentose substrate in the photorespiration process. Both reactions occur simultaneously and in competition at the same active site. Although the small subunit is not catalytic it is essential for maximal activity. The protein is Ribulose bisphosphate carboxylase small subunit of Pyropia dentata (Red alga).